We begin with the raw amino-acid sequence, 127 residues long: Small ribosomal subunit protein bS6 (127 aa).

Residues 106–117 show a composition bias toward basic and acidic residues; the sequence is ERKAQSEKKEAE. Residues 106–127 form a disordered region; the sequence is ERKAQSEKKEAEVSEGEGGTEA. Over residues 118 to 127 the composition is skewed to acidic residues; the sequence is VSEGEGGTEA.

It belongs to the bacterial ribosomal protein bS6 family.

Binds together with bS18 to 16S ribosomal RNA. The chain is Small ribosomal subunit protein bS6 from Thermotoga neapolitana (strain ATCC 49049 / DSM 4359 / NBRC 107923 / NS-E).